Here is a 658-residue protein sequence, read N- to C-terminus: uncharacterized protein (658 aa).

A compositionally biased stretch (low complexity) spans 516 to 639; that stretch reads SSNNSNSSNN…NNNNNSSQGG (124 aa). The segment at 516-646 is disordered; the sequence is SSNNSNSSNN…QGGNSQGGSG (131 aa).

It is found in the cytoplasm. This is an uncharacterized protein from Schizosaccharomyces pombe (strain 972 / ATCC 24843) (Fission yeast).